The chain runs to 318 residues: Probable ABC transporter permease protein MG189 (318 aa).

Transmembrane regions (helical) follow at residues V42 to F62, A98 to I118, L134 to Q154, P169 to Y189, V230 to G250, and L282 to H302. The ABC transmembrane type-1 domain occupies I99–F301.

It belongs to the binding-protein-dependent transport system permease family. MalFG subfamily.

It localises to the cell membrane. Functionally, probably part of a binding-protein-dependent transport system. Probably responsible for the translocation of the substrate across the membrane. The polypeptide is Probable ABC transporter permease protein MG189 (Mycoplasma genitalium (strain ATCC 33530 / DSM 19775 / NCTC 10195 / G37) (Mycoplasmoides genitalium)).